Here is a 140-residue protein sequence, read N- to C-terminus: Large ribosomal subunit protein uL16 (140 aa).

The protein belongs to the universal ribosomal protein uL16 family. As to quaternary structure, part of the 50S ribosomal subunit.

Binds 23S rRNA and is also seen to make contacts with the A and possibly P site tRNAs. The protein is Large ribosomal subunit protein uL16 of Syntrophus aciditrophicus (strain SB).